Here is a 555-residue protein sequence, read N- to C-terminus: Putative protein NRT1/ PTR FAMILY 2.14 (555 aa).

12 consecutive transmembrane segments (helical) span residues 62–82 (VTLI…GAFI), 93–113 (IVFG…TSLV), 135–155 (YSQL…TGGI), 181–201 (FFSW…TLVL), 209–229 (WGIG…LLFV), 234–254 (YVFV…LVAA), 319–339 (IKSI…FLAM), 363–383 (LIPP…WLPF), 405–425 (LQKV…SGIV), 441–461 (VFWL…TIVG), 480–500 (SLLY…VSIV), and 523–543 (CFYY…FWCA).

It belongs to the major facilitator superfamily. Proton-dependent oligopeptide transporter (POT/PTR) (TC 2.A.17) family. Not detected.

Its subcellular location is the membrane. The chain is Putative protein NRT1/ PTR FAMILY 2.14 (NPF2.14) from Arabidopsis thaliana (Mouse-ear cress).